We begin with the raw amino-acid sequence, 610 residues long: Preterminal protein (610 aa).

The tract at residues 288-379 is disordered; the sequence is TLRSGTQTGL…ESFSDDVGLS (92 aa). A Nuclear localization signal motif is present at residues 328 to 337; it reads SLPIRRRRRR. Positions 331–340 are enriched in basic residues; it reads IRRRRRRGTR. Residues 341–350 show a composition bias toward basic and acidic residues; sequence RQVEREDSVR. Ser-549 is modified (O-(5'-phospho-DNA)-serine).

The protein belongs to the adenoviridae terminal protein family. Heterodimer with the polymerase; this heterodimer binds to bp 9 to 18 of the genome. Interacts with host POU2F1; POU2F1 binds to the auxiliary sequences in the inverted terminal repeats and tethers the pTP-POL heterodimer to the origin DNA thereby participating in the assembly of the pre-initiation complex (POL-TP-DBP-NFIA-POU2F1). Post-translationally, preterminal protein is used to replicate viral genome, upon genomic encapsidation it is processed first into iTP and finally into TP by adenovirus protease.

Its subcellular location is the host nucleus matrix. In terms of biological role, protein covalently bound to the viral DNA that acts as a primer for viral genomic replication by DNA strand displacement. Assembles on the viral origin of replication in an initiation complex with viral polymerase, DBP, host NFIA and host POU2F1/OCT1. During initiation, the polymerase covalently couples the first dCTP with Ser-580 of pTP. The terminal protein stimulates the template activity over 20 fold compared to protein-free templates. Neo-synthesized viral genomes are linked to two preterminal proteins, one for each 5' end. These new genomes are encapsidated in the nucleus, and during capsid maturation by viral protease, preterminal protein is first cleaved into intermediary (iTP), then into mature TP. May play a role in host nuclear matrix localization of genomic DNA. This is Preterminal protein from Snake adenovirus serotype 1 (SnAdV-1).